A 148-amino-acid polypeptide reads, in one-letter code: NADPH-dependent 7-cyano-7-deazaguanine reductase (148 aa).

C50 functions as the Thioimide intermediate in the catalytic mechanism. The Proton donor role is filled by D57. Residues 72 to 74 (VES) and 91 to 92 (HE) contribute to the substrate site.

This sequence belongs to the GTP cyclohydrolase I family. QueF type 1 subfamily.

The protein localises to the cytoplasm. It carries out the reaction 7-aminomethyl-7-carbaguanine + 2 NADP(+) = 7-cyano-7-deazaguanine + 2 NADPH + 3 H(+). Its pathway is tRNA modification; tRNA-queuosine biosynthesis. Catalyzes the NADPH-dependent reduction of 7-cyano-7-deazaguanine (preQ0) to 7-aminomethyl-7-deazaguanine (preQ1). This Helicobacter pylori (strain ATCC 700392 / 26695) (Campylobacter pylori) protein is NADPH-dependent 7-cyano-7-deazaguanine reductase.